A 176-amino-acid chain; its full sequence is Peptide methionine sulfoxide reductase MsrA (176 aa).

The active site involves Cys-14.

This sequence belongs to the MsrA Met sulfoxide reductase family.

It carries out the reaction L-methionyl-[protein] + [thioredoxin]-disulfide + H2O = L-methionyl-(S)-S-oxide-[protein] + [thioredoxin]-dithiol. The enzyme catalyses [thioredoxin]-disulfide + L-methionine + H2O = L-methionine (S)-S-oxide + [thioredoxin]-dithiol. Its function is as follows. Has an important function as a repair enzyme for proteins that have been inactivated by oxidation. Catalyzes the reversible oxidation-reduction of methionine sulfoxide in proteins to methionine. This Halalkalibacterium halodurans (strain ATCC BAA-125 / DSM 18197 / FERM 7344 / JCM 9153 / C-125) (Bacillus halodurans) protein is Peptide methionine sulfoxide reductase MsrA.